A 255-amino-acid chain; its full sequence is Type III pantothenate kinase (255 aa).

6–13 is a binding site for ATP; the sequence is DIGNTNIK. 107–110 lines the substrate pocket; the sequence is GADR. D109 serves as the catalytic Proton acceptor. Residue T132 coordinates ATP. T184 provides a ligand contact to substrate.

It belongs to the type III pantothenate kinase family. As to quaternary structure, homodimer. The cofactor is NH4(+). K(+) is required as a cofactor.

Its subcellular location is the cytoplasm. It carries out the reaction (R)-pantothenate + ATP = (R)-4'-phosphopantothenate + ADP + H(+). The protein operates within cofactor biosynthesis; coenzyme A biosynthesis; CoA from (R)-pantothenate: step 1/5. Its function is as follows. Catalyzes the phosphorylation of pantothenate (Pan), the first step in CoA biosynthesis. The chain is Type III pantothenate kinase from Roseiflexus sp. (strain RS-1).